A 317-amino-acid polypeptide reads, in one-letter code: 1-phosphofructokinase (317 aa).

Residues 223–228 and 254–255 contribute to the ATP site; these read SMGAEG and GD. Asp255 (proton acceptor) is an active-site residue.

Belongs to the carbohydrate kinase PfkB family.

The catalysed reaction is beta-D-fructose 1-phosphate + ATP = beta-D-fructose 1,6-bisphosphate + ADP + H(+). Its function is as follows. Catalyzes the ATP-dependent phosphorylation of fructose-l-phosphate to fructose-l,6-bisphosphate. The polypeptide is 1-phosphofructokinase (Vibrio cholerae serotype O1 (strain ATCC 39315 / El Tor Inaba N16961)).